A 427-amino-acid chain; its full sequence is Dihydroorotase (427 aa).

Positions 60 and 62 each coordinate Zn(2+). Substrate is bound by residues 62–64 (HFR) and Asn-94. Positions 152, 179, and 232 each coordinate Zn(2+). Asn-278 is a binding site for substrate. Asp-305 lines the Zn(2+) pocket. Asp-305 is an active-site residue. Residues His-309 and 323–324 (FG) each bind substrate.

The protein belongs to the metallo-dependent hydrolases superfamily. DHOase family. Class I DHOase subfamily. Zn(2+) is required as a cofactor.

The enzyme catalyses (S)-dihydroorotate + H2O = N-carbamoyl-L-aspartate + H(+). Its pathway is pyrimidine metabolism; UMP biosynthesis via de novo pathway; (S)-dihydroorotate from bicarbonate: step 3/3. In terms of biological role, catalyzes the reversible cyclization of carbamoyl aspartate to dihydroorotate. In Enterococcus faecalis (strain ATCC 700802 / V583), this protein is Dihydroorotase.